The following is a 72-amino-acid chain: DNA-directed RNA polymerase subunit epsilon (72 aa).

The protein belongs to the RNA polymerase subunit epsilon family. RNAP is composed of a core of 2 alpha, a beta and a beta' subunit. The core is associated with a delta subunit, and at least one of epsilon or omega. When a sigma factor is associated with the core the holoenzyme is formed, which can initiate transcription.

It carries out the reaction RNA(n) + a ribonucleoside 5'-triphosphate = RNA(n+1) + diphosphate. A non-essential component of RNA polymerase (RNAP). This chain is DNA-directed RNA polymerase subunit epsilon, found in Staphylococcus haemolyticus (strain JCSC1435).